A 353-amino-acid chain; its full sequence is 3-isopropylmalate dehydrogenase (353 aa).

4 residues coordinate substrate: Arg-97, Arg-107, Arg-135, and Asp-219. Asp-219, Asp-243, and Asp-247 together coordinate Mg(2+).

Belongs to the isocitrate and isopropylmalate dehydrogenases family. LeuB type 1 subfamily. In terms of assembly, homodimer. It depends on Mg(2+) as a cofactor. Requires Mn(2+) as cofactor.

It is found in the cytoplasm. The catalysed reaction is (2R,3S)-3-isopropylmalate + NAD(+) = 4-methyl-2-oxopentanoate + CO2 + NADH. The protein operates within amino-acid biosynthesis; L-leucine biosynthesis; L-leucine from 3-methyl-2-oxobutanoate: step 3/4. Functionally, catalyzes the oxidation of 3-carboxy-2-hydroxy-4-methylpentanoate (3-isopropylmalate) to 3-carboxy-4-methyl-2-oxopentanoate. The product decarboxylates to 4-methyl-2 oxopentanoate. This chain is 3-isopropylmalate dehydrogenase, found in Bacteroides fragilis (strain ATCC 25285 / DSM 2151 / CCUG 4856 / JCM 11019 / LMG 10263 / NCTC 9343 / Onslow / VPI 2553 / EN-2).